The sequence spans 238 residues: Pyruvate formate-lyase-activating enzyme (238 aa).

Residues 15–236 (VDGPGIRTVV…KKLEKYLKEL (222 aa)) enclose the Radical SAM core domain. [4Fe-4S] cluster-binding residues include cysteine 29, cysteine 33, and cysteine 36. S-adenosyl-L-methionine-binding positions include 35 to 37 (YCH), glycine 78, 126 to 128 (DIK), and histidine 199.

The protein belongs to the organic radical-activating enzymes family. The cofactor is [4Fe-4S] cluster.

The protein localises to the cytoplasm. The enzyme catalyses glycyl-[formate C-acetyltransferase] + reduced [flavodoxin] + S-adenosyl-L-methionine = glycin-2-yl radical-[formate C-acetyltransferase] + semiquinone [flavodoxin] + 5'-deoxyadenosine + L-methionine + H(+). Functionally, activation of pyruvate formate-lyase under anaerobic conditions by generation of an organic free radical, using S-adenosylmethionine and reduced flavodoxin as cosubstrates to produce 5'-deoxy-adenosine. This Clostridium pasteurianum protein is Pyruvate formate-lyase-activating enzyme (act).